The primary structure comprises 393 residues: Protein TsgA (393 aa).

12 consecutive transmembrane segments (helical) span residues 11–31 (WISFLSYALTGALVIVTGMVM), 51–71 (FLNAGILISIFLNAWLMEIVP), 78–98 (FGFLLMVLAVAGLMFSHSLAL), 101–121 (TAMFILGVVSGITMSIGTFLI), 134–154 (LLFTDSFFSMAGMIFPMIAAF), 162–182 (WYWVYACIGLVYVAIFILTFG), 206–226 (IGVLFLSVAALCYILGQLGFI), 245–265 (TLVSNFWMSYMVGMWAFSFIL), 273–293 (ILTVLAGLAAILMYVFNTGTP), 297–317 (AWSILALGFFSSAIYTTIITL), 332–352 (FVLTCGTIGTMLTFVVTGPIV), and 361–381 (LLTANGLYAVVFVMCFLLGFV).

The protein belongs to the major facilitator superfamily. TsgA family.

The protein localises to the cell inner membrane. This chain is Protein TsgA, found in Shigella boydii serotype 4 (strain Sb227).